The chain runs to 308 residues: Thiohydrolase (308 aa).

Belongs to the polyketide transferase af380 family.

The protein operates within mycotoxin biosynthesis. In terms of biological role, thiohydrolase; part of the gene cluster that mediates the biosynthesis of brefeldin A (BFA), a protein transport inhibitor that shows antiviral, antifungal, and antitumor properties. The proposed biosynthesis of BFA involves formation of an acyclic polyketide chain that is differentially tailored throughout the backbone. The highly reducing polyketide synthase Bref-PKS is proposed to synthesize the precisely reduced octaketide precursor, which could then be directly offloaded by the thiohydrolase enzyme Bref-TH followed by a cytochrome P450 monooxygenase-mediated formation of the cyclopentane ring and macrocyclization to afford 7-deoxy BFA. Alternatively, the first ring annulation can also occur on the ACP-tethered intermediate before the thiohydrolase release and lactonization. The C7-hydroxylation by another cytochrome P450 monooxygenase is believed to be the final step in the process to obtain the final structure of BFA. In addition to the HRPKS Bref-PKS and the thiohydrolase Bref-TH, the brefeldin A biosynthesis cluster contains 4 cytochrome p450 monooxygenases (called orf3 to orf6), as well a the probable cluster-specific transcription regulator orf8. The polypeptide is Thiohydrolase (Eupenicillium brefeldianum (Penicillium brefeldianum)).